The following is a 187-amino-acid chain: Threonylcarbamoyl-AMP synthase (187 aa).

Positions 4–187 constitute a YrdC-like domain; the sequence is NHTDDPFLLD…GHSGQTIRDN (184 aa). The interval 168–187 is disordered; the sequence is GSRSPSKIRHGHSGQTIRDN.

Belongs to the SUA5 family. TsaC subfamily.

The protein localises to the cytoplasm. The catalysed reaction is L-threonine + hydrogencarbonate + ATP = L-threonylcarbamoyladenylate + diphosphate + H2O. Required for the formation of a threonylcarbamoyl group on adenosine at position 37 (t(6)A37) in tRNAs that read codons beginning with adenine. Catalyzes the conversion of L-threonine, HCO(3)(-)/CO(2) and ATP to give threonylcarbamoyl-AMP (TC-AMP) as the acyladenylate intermediate, with the release of diphosphate. The protein is Threonylcarbamoyl-AMP synthase of Pseudoalteromonas atlantica (strain T6c / ATCC BAA-1087).